Consider the following 290-residue polypeptide: Protein SSO1 (290 aa).

Residues 1-265 lie on the Cytoplasmic side of the membrane; the sequence is MSYNNPYQLE…ARKARKNKIR (265 aa). The 63-residue stretch at 190-252 folds into the t-SNARE coiled-coil homology domain; that stretch reads LAEVQARHQE…EQGVGHTDKA (63 aa). A helical; Anchor for type IV membrane protein transmembrane segment spans residues 266-287; that stretch reads CWLIVFAIIVVVVVVVVVPAVV. At 288 to 290 the chain is on the extracellular side; sequence KTR.

The protein belongs to the syntaxin family.

The protein resides in the membrane. Its function is as follows. Required for vesicle fusion with the plasma membrane. This chain is Protein SSO1 (SSO1), found in Saccharomyces cerevisiae (strain ATCC 204508 / S288c) (Baker's yeast).